The sequence spans 173 residues: Mesencephalic astrocyte-derived neurotrophic factor homolog (173 aa).

A signal peptide spans 1 to 22 (MKTWYMVVVIGFLATLVQTSLA). 4 disulfide bridges follow: Cys-28/Cys-114, Cys-31/Cys-103, Cys-61/Cys-72, and Cys-148/Cys-151.

This sequence belongs to the ARMET family.

The protein resides in the secreted. Required during the maturation of the embryonic nervous system for maintenance of neuronal and cuticular connectivity. Essential for maintenance of dopaminergic neurons and dopamine levels. This chain is Mesencephalic astrocyte-derived neurotrophic factor homolog, found in Drosophila yakuba (Fruit fly).